The primary structure comprises 310 residues: 26S proteasome non-ATPase regulatory subunit 7 homolog B (310 aa).

Methionine 1 carries the post-translational modification N-acetylmethionine. The MPN domain maps to 17–154; sequence VIVHPLVLLS…YYAVEEVKEN (138 aa).

This sequence belongs to the peptidase M67A family. In terms of assembly, component of the 19S regulatory particle (RP/PA700) lid subcomplex of the 26S proteasome. The 26S proteasome is composed of a core protease (CP), known as the 20S proteasome, capped at one or both ends by the 19S regulatory particle (RP/PA700). The RP/PA700 complex is composed of at least 17 different subunits in two subcomplexes, the base and the lid, which form the portions proximal and distal to the 20S proteolytic core, respectively.

Acts as a regulatory subunit of the 26S proteasome which is involved in the ATP-dependent degradation of ubiquitinated proteins. The chain is 26S proteasome non-ATPase regulatory subunit 7 homolog B (RPN8B) from Arabidopsis thaliana (Mouse-ear cress).